The sequence spans 193 residues: Dual-action ribosomal maturation protein DarP (193 aa).

The protein belongs to the DarP family.

The protein resides in the cytoplasm. Functionally, member of a network of 50S ribosomal subunit biogenesis factors which assembles along the 30S-50S interface, preventing incorrect 23S rRNA structures from forming. Promotes peptidyl transferase center (PTC) maturation. The protein is Dual-action ribosomal maturation protein DarP of Vibrio cholerae serotype O1 (strain ATCC 39315 / El Tor Inaba N16961).